Here is a 159-residue protein sequence, read N- to C-terminus: U1 small nuclear ribonucleoprotein C (159 aa).

The Matrin-type zinc finger occupies phenylalanine 4 to aspartate 36. Tyrosine 8 is modified (phosphotyrosine). Residue serine 17 is modified to Phosphoserine. At lysine 52 the chain carries N6-acetyllysine. Disordered stretches follow at residues isoleucine 62–histidine 96 and arginine 140–arginine 159. A compositionally biased stretch (pro residues) spans proline 63–methionine 92.

The protein belongs to the U1 small nuclear ribonucleoprotein C family. In terms of assembly, component of the U1 snRNP. The U1 snRNP is composed of the U1 snRNA and the 7 core Sm proteins SNRPB, SNRPD1, SNRPD2, SNRPD3, SNRPE, SNRPF and SNRPG that assemble in a heptameric protein ring on the Sm site of the small nuclear RNA to form the core snRNP, and at least 3 U1 snRNP-specific proteins SNRNP70/U1-70K, SNRPA/U1-A and SNRPC/U1-C. SNRPC/U1-C interacts with U1 snRNA and the 5' splice-site region of the pre-mRNA. Interacts (via N-terminus) with TIA1 (via C-terminus); thereby promoting spliceosomal U1 snRNP recruitment to 5' splice sites.

It localises to the nucleus. Functionally, component of the spliceosomal U1 snRNP, which is essential for recognition of the pre-mRNA 5' splice-site and the subsequent assembly of the spliceosome. SNRPC/U1-C is directly involved in initial 5' splice-site recognition for both constitutive and regulated alternative splicing. The interaction with the 5' splice-site seems to precede base-pairing between the pre-mRNA and the U1 snRNA. Stimulates commitment or early (E) complex formation by stabilizing the base pairing of the 5' end of the U1 snRNA and the 5' splice-site region. This chain is U1 small nuclear ribonucleoprotein C, found in Homo sapiens (Human).